The primary structure comprises 223 residues: Uracil-DNA glycosylase (223 aa).

D67 functions as the Proton acceptor in the catalytic mechanism.

The protein belongs to the uracil-DNA glycosylase (UDG) superfamily. UNG family.

It localises to the cytoplasm. It catalyses the reaction Hydrolyzes single-stranded DNA or mismatched double-stranded DNA and polynucleotides, releasing free uracil.. Excises uracil residues from the DNA which can arise as a result of misincorporation of dUMP residues by DNA polymerase or due to deamination of cytosine. This is Uracil-DNA glycosylase from Borrelia hermsii (strain HS1 / DAH).